The primary structure comprises 241 residues: 1-(5-phosphoribosyl)-5-[(5-phosphoribosylamino)methylideneamino] imidazole-4-carboxamide isomerase (241 aa).

Asp8 (proton acceptor) is an active-site residue. Asp129 (proton donor) is an active-site residue.

The protein belongs to the HisA/HisF family.

Its subcellular location is the cytoplasm. The catalysed reaction is 1-(5-phospho-beta-D-ribosyl)-5-[(5-phospho-beta-D-ribosylamino)methylideneamino]imidazole-4-carboxamide = 5-[(5-phospho-1-deoxy-D-ribulos-1-ylimino)methylamino]-1-(5-phospho-beta-D-ribosyl)imidazole-4-carboxamide. The protein operates within amino-acid biosynthesis; L-histidine biosynthesis; L-histidine from 5-phospho-alpha-D-ribose 1-diphosphate: step 4/9. In Caulobacter sp. (strain K31), this protein is 1-(5-phosphoribosyl)-5-[(5-phosphoribosylamino)methylideneamino] imidazole-4-carboxamide isomerase.